Here is a 208-residue protein sequence, read N- to C-terminus: Putative dioxygenase RT0384 (208 aa).

Belongs to the intradiol ring-cleavage dioxygenase family.

The chain is Putative dioxygenase RT0384 from Rickettsia typhi (strain ATCC VR-144 / Wilmington).